The following is a 343-amino-acid chain: Undecaprenyl-diphosphatase 2 (343 aa).

4 helical membrane-spanning segments follow: residues 21–41, 57–77, 104–124, and 129–149; these read LFPVSSLGHSVLIPALIGGSW, PYLTFVVGLHVATAVALLVFF, LAWLIVAATVPVGIIGLALEH, and LFAKPLAAALFLTANGMILLA. The span at 179 to 193 shows a compositional bias: low complexity; that stretch reads VPAPATVPTQTTSAP. The tract at residues 179–202 is disordered; that stretch reads VPAPATVPTQTTSAPGGRATARHT. Transmembrane regions (helical) follow at residues 225 to 245, 265 to 285, 294 to 314, and 322 to 342; these read AGVIGLFQTLALLAGISRSGI, FLLATPVILAAGLLKLPALAG, QVILGALIAGIAAYLSIRFLV, and LTPFAIYCLLTGALCTVRFAI.

This sequence belongs to the UppP family.

It is found in the cell membrane. The catalysed reaction is di-trans,octa-cis-undecaprenyl diphosphate + H2O = di-trans,octa-cis-undecaprenyl phosphate + phosphate + H(+). In terms of biological role, catalyzes the dephosphorylation of undecaprenyl diphosphate (UPP). Confers resistance to bacitracin. This is Undecaprenyl-diphosphatase 2 from Frankia alni (strain DSM 45986 / CECT 9034 / ACN14a).